Reading from the N-terminus, the 601-residue chain is Glutathione-regulated potassium-efflux system protein KefB (601 aa).

13 helical membrane passes run 4–24 (SDLL…VPLA), 29–49 (IGAV…GLGF), 55–75 (EILH…GLEL), 87–107 (IFGV…GLLM), 115–135 (AAVV…LQLM), 152–172 (VLLF…LLAG), 177–197 (HVNW…LIGG), 207–227 (FIAS…LVLG), 230–250 (LFME…GVLL), 268–288 (GLLL…GVLY), 291–311 (LLWV…VLYL), 326–346 (FAGV…LPAS), and 356–376 (ALLL…MKGI). The 120-residue stretch at 400–519 (KPQVIIVGFG…AGVTQFSRET (120 aa)) folds into the RCK N-terminal domain.

Belongs to the monovalent cation:proton antiporter 2 (CPA2) transporter (TC 2.A.37) family. KefB subfamily. In terms of assembly, interacts with the regulatory subunit KefG.

The protein resides in the cell inner membrane. In terms of biological role, pore-forming subunit of a potassium efflux system that confers protection against electrophiles. Catalyzes K(+)/H(+) antiport. The sequence is that of Glutathione-regulated potassium-efflux system protein KefB from Klebsiella pneumoniae subsp. pneumoniae (strain ATCC 700721 / MGH 78578).